Consider the following 147-residue polypeptide: Bis(5'-nucleosyl)-tetraphosphatase [asymmetrical] (147 aa).

The residue at position 2 (alanine 2) is an N-acetylalanine. Residues 2 to 139 enclose the Nudix hydrolase domain; that stretch reads ALRACGLIIF…EMKATLQEGH (138 aa). Positions 43 to 64 match the Nudix box motif; the sequence is GHVDPGENDLETALRETREETG.

Belongs to the Nudix hydrolase family. A divalent metal cation is required as a cofactor.

The catalysed reaction is P(1),P(4)-bis(5'-guanosyl) tetraphosphate + H2O = GMP + GTP + 2 H(+). It carries out the reaction a 5'-end CoA-ribonucleoside in mRNA + H2O = a 5'-end phospho-adenosine-phospho-ribonucleoside in mRNA + (R)-4'-phosphopantetheine + 2 H(+). It catalyses the reaction a 5'-end FAD-phospho-ribonucleoside in mRNA + H2O = a 5'-end phospho-adenosine-phospho-ribonucleoside in mRNA + FMN + 2 H(+). Catalyzes the asymmetric hydrolysis of diadenosine 5',5'''-P1,P4-tetraphosphate (Ap4A) to yield AMP and ATP. Exhibits decapping activity towards FAD-capped RNAs and dpCoA-capped RNAs in vitro. The sequence is that of Bis(5'-nucleosyl)-tetraphosphatase [asymmetrical] (Nudt2) from Mus musculus (Mouse).